A 273-amino-acid polypeptide reads, in one-letter code: Torsin-1A (273 aa).

Residues 45–205 (KPKKPLTLSL…VSVFNNKNSG (161 aa)) are interaction with SNAPIN. Residue 56–63 (GWTGTGKN) participates in ATP binding. 2 N-linked (GlcNAc...) asparagine glycosylation sites follow: Asn-97 and Asn-112.

This sequence belongs to the ClpA/ClpB family. Torsin subfamily. In terms of assembly, homohexamer. Interacts with TOR1B; the interaction may be specific of neural tissues. Interacts (ATP-bound) with TOR1AIP1 and TOR1AIP2; the interactions induce ATPase activity. Interacts with KLHL14; preferentially when ATP-free. Interacts with KLC1 (via TPR repeats); the interaction associates TOR1A with the kinesin oligomeric complex. Interacts with COPS4; the interaction associates TOR1A with the CSN complex. Interacts with SNAPIN; the interaction is direct and associates SNAPIN with the CSN complex. Interacts with STON2. Interacts (ATP-bound) with SYNE3 (via KASH domain); the interaction is required for SYNE3 nuclear envelope localization. Interacts with VIM; the interaction associates TOR1A with the cytoskeleton. Interacts with PLEC. Interacts (ATP-bound) with SLC6A3; regulates SLC6A3 transport to the plasma membrane. In terms of processing, N-glycosylated.

The protein localises to the endoplasmic reticulum lumen. It localises to the nucleus membrane. The protein resides in the cell projection. Its subcellular location is the growth cone. It is found in the cytoplasmic vesicle membrane. The protein localises to the synapse. It localises to the synaptosome. The protein resides in the cytoplasm. Its subcellular location is the cytoskeleton. The catalysed reaction is ATP + H2O = ADP + phosphate + H(+). Functionally, protein with chaperone functions important for the control of protein folding, processing, stability and localization as well as for the reduction of misfolded protein aggregates. Involved in the regulation of synaptic vesicle recycling, controls STON2 protein stability in collaboration with the COP9 signalosome complex (CSN). In the nucleus, may link the cytoskeleton with the nuclear envelope, this mechanism seems to be crucial for the control of nuclear polarity, cell movement and, specifically in neurons, nuclear envelope integrity. Participates in the cellular trafficking and may regulate the subcellular location of multipass membrane proteins such as the dopamine transporter SLC6A3, leading to the modulation of dopamine neurotransmission. In the endoplasmic reticulum, plays a role in the quality control of protein folding by increasing clearance of misfolded proteins such as SGCE variants or holding them in an intermediate state for proper refolding. May have a redundant function with TOR1B in non-neural tissues. This chain is Torsin-1A (TOR1A), found in Cricetus cricetus (Black-bellied hamster).